A 67-amino-acid chain; its full sequence is Probable Sec-independent protein translocase protein TatE (67 aa).

The chain crosses the membrane as a helical span at residues 4–21; sequence ISITKLLVVAALVVLLFG.

The protein belongs to the TatA/E family. TatE subfamily.

The protein localises to the cell inner membrane. Functionally, part of the twin-arginine translocation (Tat) system that transports large folded proteins containing a characteristic twin-arginine motif in their signal peptide across membranes. TatE shares overlapping functions with TatA. This chain is Probable Sec-independent protein translocase protein TatE, found in Salmonella dublin (strain CT_02021853).